The chain runs to 698 residues: Polyribonucleotide nucleotidyltransferase (698 aa).

Residues D490 and D496 each contribute to the Mg(2+) site. A KH domain is found at 557 to 616 (PKVVTMTIKPDKIRDVIGPGGKKINEIIDETGVKLDIEQDGTIFIGAVDQAMINRAREII). In terms of domain architecture, S1 motif spans 626 to 694 (GQTYQATVKR…KQGRVNASHR (69 aa)).

It belongs to the polyribonucleotide nucleotidyltransferase family. Requires Mg(2+) as cofactor.

It is found in the cytoplasm. The enzyme catalyses RNA(n+1) + phosphate = RNA(n) + a ribonucleoside 5'-diphosphate. Functionally, involved in mRNA degradation. Catalyzes the phosphorolysis of single-stranded polyribonucleotides processively in the 3'- to 5'-direction. This Staphylococcus aureus (strain MRSA252) protein is Polyribonucleotide nucleotidyltransferase.